The chain runs to 260 residues: Imidazole glycerol phosphate synthase subunit HisF (260 aa).

Active-site residues include aspartate 12 and aspartate 131.

This sequence belongs to the HisA/HisF family. Heterodimer of HisH and HisF.

The protein localises to the cytoplasm. The catalysed reaction is 5-[(5-phospho-1-deoxy-D-ribulos-1-ylimino)methylamino]-1-(5-phospho-beta-D-ribosyl)imidazole-4-carboxamide + L-glutamine = D-erythro-1-(imidazol-4-yl)glycerol 3-phosphate + 5-amino-1-(5-phospho-beta-D-ribosyl)imidazole-4-carboxamide + L-glutamate + H(+). Its pathway is amino-acid biosynthesis; L-histidine biosynthesis; L-histidine from 5-phospho-alpha-D-ribose 1-diphosphate: step 5/9. IGPS catalyzes the conversion of PRFAR and glutamine to IGP, AICAR and glutamate. The HisF subunit catalyzes the cyclization activity that produces IGP and AICAR from PRFAR using the ammonia provided by the HisH subunit. This is Imidazole glycerol phosphate synthase subunit HisF from Corynebacterium jeikeium (strain K411).